A 100-amino-acid chain; its full sequence is Urease subunit gamma (100 aa).

Belongs to the urease gamma subunit family. In terms of assembly, heterotrimer of UreA (gamma), UreB (beta) and UreC (alpha) subunits. Three heterotrimers associate to form the active enzyme.

Its subcellular location is the cytoplasm. It catalyses the reaction urea + 2 H2O + H(+) = hydrogencarbonate + 2 NH4(+). It participates in nitrogen metabolism; urea degradation; CO(2) and NH(3) from urea (urease route): step 1/1. The sequence is that of Urease subunit gamma from Pseudomonas fluorescens (strain ATCC BAA-477 / NRRL B-23932 / Pf-5).